Reading from the N-terminus, the 125-residue chain is uncharacterized protein (125 aa).

The protein belongs to the HesB/IscA family.

This is an uncharacterized protein from Azospirillum brasilense.